The following is a 318-amino-acid chain: Polyprenal reductase (318 aa).

Residues 1-11 (MAPWAEAEHSA) are Cytoplasmic-facing. Residues 12 to 34 (LNPLRAVWLTLTAAFLLTLLLQL) traverse the membrane as a helical segment. The Lumenal segment spans residues 35 to 80 (LPPGLLPGCAIFQDLIRYGKTKCGEPSRPAACRAFDVPKRYFSHFY). A helical membrane pass occupies residues 81-101 (IISVLWNGFLLWCLTQSLFLG). Topologically, residues 102-117 (APFPSWLHGLLRILGA) are cytoplasmic. Residues 118–138 (AQFQGGELALSAFLVLVFLWL) form a helical membrane-spanning segment. Residues 139 to 157 (HSLRRLFECLYVSVFSNVM) lie on the Lumenal side of the membrane. A helical membrane pass occupies residues 158 to 178 (IHVVQYCFGLVYYVLVGLTVL). Residues 179-194 (SQVPMDGRNAYITGKN) are Cytoplasmic-facing. The chain crosses the membrane as a helical span at residues 195–215 (LLMQARWFHILGMMMFIWSSA). Residues 216–260 (HQYKCHVILGNLRKNKAGVVIHCNHRIPFGDWFEYVSSPNYLAEL) are Lumenal-facing. Residues 261 to 281 (MIYVSMAVTFGFHNLTWWLVV) form a helical membrane-spanning segment. Residues 282–318 (TNVFFNQALSAFLSHQFYKSKFVSYPKHRKAFLPFLF) are Cytoplasmic-facing.

Belongs to the steroid 5-alpha reductase family. Polyprenal reductase subfamily. In terms of tissue distribution, expressed in preadipocytes (at protein level). Overexpressed in hormone-refractory prostate cancers (HRPC). Almost no or little expression in normal adult organs.

The protein resides in the endoplasmic reticulum membrane. It catalyses the reaction a di-trans,poly-cis-dolichal + NADP(+) = a di-trans,poly-cis-polyprenal + NADPH + H(+). The catalysed reaction is a 3-oxo-5alpha-steroid + NADP(+) = a 3-oxo-Delta(4)-steroid + NADPH + H(+). It carries out the reaction androst-4-ene-3,17-dione + NADPH + H(+) = 5alpha-androstan-3,17-dione + NADP(+). The enzyme catalyses 17beta-hydroxy-5alpha-androstan-3-one + NADP(+) = testosterone + NADPH + H(+). It functions in the pathway protein modification; protein glycosylation. In terms of biological role, plays a key role in early steps of protein N-linked glycosylation by being involved in the conversion of polyprenol into dolichol. Acts as a polyprenal reductase that mediates the reduction of polyprenal into dolichal in a NADP-dependent mechanism. Dolichols are required for the synthesis of dolichol-linked monosaccharides and the oligosaccharide precursor used for N-glycosylation. Also able to convert testosterone (T) into 5-alpha-dihydrotestosterone (DHT). This is Polyprenal reductase from Homo sapiens (Human).